A 935-amino-acid chain; its full sequence is Progesterone receptor (935 aa).

An AF3; mediates transcriptional activation region spans residues 1-164 (MTELKAKGPR…PATQRVLSPL (164 aa)). Residues 1–256 (MTELKAKGPR…AAAGGGAAAV (256 aa)) are disordered. The interval 1-568 (MTELKAKGPR…YSFESLPQKI (568 aa)) is modulating, Pro-Rich. Position 20 is a phosphoserine (Ser20). Positions 55 to 59 (LDGLL) match the LXXL motif 1 motif. Ser81 carries the phosphoserine modification. The short motif at 115-119 (LDTLL) is the LXXL motif 2 element. Phosphoserine occurs at positions 130 and 162. Residues 165 to 305 (MSRSGGKAGD…LATTTMDFTH (141 aa)) form a mediates transcriptional transrepression region. A Nuclear localization signal motif is present at residues 183 to 187 (KVLPR). Residues Ser190 and Ser213 each carry the phosphoserine modification. A compositionally biased stretch (acidic residues) spans 220 to 231 (EVEEEDGSESED). A compositionally biased stretch (low complexity) spans 232 to 246 (SAGPLLKGKPRALGG). At Ser294 the chain carries Phosphoserine; by MAPK1. Residues 328 to 353 (SYDGGAGAASAFAPPRSSPSASSTPV) are disordered. The span at 335-350 (AASAFAPPRSSPSASS) shows a compositional bias: low complexity. Residue Ser345 is modified to Phosphoserine; by MAPK. A Glycyl lysine isopeptide (Lys-Gly) (interchain with G-Cter in SUMO); alternate cross-link involves residue Lys388. Residue Lys388 forms a Glycyl lysine isopeptide (Lys-Gly) (interchain with G-Cter in ubiquitin); alternate linkage. A Phosphoserine; by CDK2 modification is found at Ser400. The interval 415–452 (PDFPLGPPPPLPPRAPPSRPGEAAVTAAPAGASVSSAS) is disordered. The segment covering 418–433 (PLGPPPPLPPRAPPSR) has biased composition (pro residues). Low complexity predominate over residues 434–452 (PGEAAVTAAPAGASVSSAS). The segment at 456 to 548 (STLECILYKA…VYPPYLNYLR (93 aa)) is AF1; mediates transcriptional activation. Lys533 participates in a covalent cross-link: Glycyl lysine isopeptide (Lys-Gly) (interchain with G-Cter in SUMO). NR C4-type zinc fingers lie at residues 569–589 (CLIC…CGSC) and 605–629 (CAGR…LRKC). A DNA-binding region (nuclear receptor) is located at residues 569-641 (CLICGDEASG…AGMVLGGRKF (73 aa)). A Phosphoserine modification is found at Ser678. Positions 681-915 (QDIQLIPPLI…EFPEMMSEVI (235 aa)) constitute an NR LBD domain. The tract at residues 689-935 (LINLLVSIEP…MVKPLLFHKK (247 aa)) is AF2; mediates transcriptional activation. Progesterone is bound at residue Arg768.

The protein belongs to the nuclear hormone receptor family. Interacts with SMARD1 and UNC45A. Interacts with CUEDC2; the interaction promotes ubiquitination, decreases sumoylation, and represses transcriptional activity. Interacts with PIAS3; the interaction promotes sumoylation of PR in a hormone-dependent manner, inhibits DNA-binding, and alters nuclear export. Interacts with SP1; the interaction requires ligand-induced phosphorylation on Ser-345 by ERK1/2-MAPK. Interacts with PRMT2. Interacts with NCOA2 and NCOA1. Interacts with KLF9. Interacts with GTF2B. Phosphorylated on multiple serine sites. Several of these sites are hormone-dependent. Phosphorylation on Ser-294 is highly hormone-dependent and modulates ubiquitination and sumoylation on Lys-388. Phosphorylation on Ser-345 also requires induction by hormone. Basal phosphorylation on Ser-81, Ser-162, Ser-190 and Ser-400 is increased in response to progesterone and can be phosphorylated in vitro by the CDK2-A1 complex. Increased levels of phosphorylation on Ser-400 also in the presence of EGF, heregulin, IGF, PMA and FBS. Phosphorylation at this site by CDK2 is ligand-independent, and increases nuclear translocation and transcriptional activity. Phosphorylation at Ser-162 and Ser-294, but not at Ser-190, is impaired during the G(2)/M phase of the cell cycle. Phosphorylation on Ser-345 by ERK1/2 MAPK is required for interaction with SP1. Post-translationally, sumoylation is hormone-dependent and represses transcriptional activity. Sumoylation on all three sites is enhanced by PIAS3. Desumoylated by SENP1. Sumoylation on Lys-388, the main site of sumoylation, is repressed by ubiquitination on the same site, and modulated by phosphorylation at Ser-294. In terms of processing, ubiquitination is hormone-dependent and represses sumoylation on the same site. Promoted by MAPK-mediated phosphorylation on Ser-294. Ubiquitinated by UBR5, leading to its degradation: UBR5 specifically recognizes and binds ligand-bound PGR when it is not associated with coactivators (NCOAs). In presence of NCOAs, the UBR5-degron is not accessible, preventing its ubiquitination and degradation. Palmitoylated by ZDHHC7 and ZDHHC21. Palmitoylation is required for plasma membrane targeting and for rapid intracellular signaling via ERK and AKT kinases and cAMP generation.

The protein localises to the nucleus. Its subcellular location is the cytoplasm. Functionally, the steroid hormones and their receptors are involved in the regulation of eukaryotic gene expression and affect cellular proliferation and differentiation in target tissues. Transcriptional activator of several progesteron-dependent promoters in a variety of cell types. Involved in activation of SRC-dependent MAPK signaling on hormone stimulation. The protein is Progesterone receptor (PGR) of Macaca sylvanus (Barbary macaque).